A 185-amino-acid polypeptide reads, in one-letter code: Ribosome-recycling factor (185 aa).

It belongs to the RRF family.

It is found in the cytoplasm. Responsible for the release of ribosomes from messenger RNA at the termination of protein biosynthesis. May increase the efficiency of translation by recycling ribosomes from one round of translation to another. The chain is Ribosome-recycling factor from Streptococcus thermophilus (strain CNRZ 1066).